The sequence spans 228 residues: UPF0758 protein CLI_3057 (228 aa).

Residues 106–228 (KINTPLDVSN…YVSMKEKGTI (123 aa)) enclose the MPN domain. Residues His177, His179, and Asp190 each contribute to the Zn(2+) site. Residues 177-190 (HNHPSGDPTPSKED) carry the JAMM motif motif.

The protein belongs to the UPF0758 family.

This chain is UPF0758 protein CLI_3057, found in Clostridium botulinum (strain Langeland / NCTC 10281 / Type F).